Here is a 350-residue protein sequence, read N- to C-terminus: S-adenosylmethionine:tRNA ribosyltransferase-isomerase (350 aa).

The protein belongs to the QueA family. In terms of assembly, monomer.

It is found in the cytoplasm. It carries out the reaction 7-aminomethyl-7-carbaguanosine(34) in tRNA + S-adenosyl-L-methionine = epoxyqueuosine(34) in tRNA + adenine + L-methionine + 2 H(+). It participates in tRNA modification; tRNA-queuosine biosynthesis. Functionally, transfers and isomerizes the ribose moiety from AdoMet to the 7-aminomethyl group of 7-deazaguanine (preQ1-tRNA) to give epoxyqueuosine (oQ-tRNA). This Bacillus cereus (strain G9842) protein is S-adenosylmethionine:tRNA ribosyltransferase-isomerase.